Consider the following 541-residue polypeptide: Lipase-like PAD4 (541 aa).

The active-site Nucleophile is the Ser118. Active-site charge relay system residues include Asp178 and His229.

Belongs to the AB hydrolase superfamily. Lipase family. As to quaternary structure, part of a nuclear complex made of EDS1, SG101 and PAD4 that can be redirected to the cytoplasm in the presence of an extranuclear form of EDS1. Sabilized by direct interaction with EDS1 in infected leaves. Part of a nuclear protein complex made of VICTR, PAD4 and EDS1. Interacts with VICTR. Interacts with EDS1.

Its subcellular location is the nucleus. It is found in the cytoplasm. Its function is as follows. Probable lipase required downstream of MPK4 for accumulation of the plant defense-potentiating molecule, salicylic acid, thus contributing to the plant innate immunity against invasive biotrophic pathogens and to defense mechanisms upon recognition of microbe-associated molecular patterns (MAMPs). Participates in the regulation of various molecular and physiological processes that influence fitness. Together with SG101, required for programmed cell death (PCD) triggered by NBS-LRR resistance proteins (e.g. RPS4, RPW8.1 and RPW8.2) in response to the fungal toxin fumonisin B1 (FB1) and avirulent pathogens (e.g. P.syringae pv. tomato strain DC3000 avrRps4 and pv. maculicola, turnip crinkle virus (TCV), and H.arabidopsidis isolates CALA2, EMOY2, EMWA1 and HIND4). Together with EDS1, confers a basal resistance by restricting the growth of virulent pathogens (e.g. H.arabidopsidis isolates NOCO2 and EMCO5, E.orontii isolate MGH, and P.syringae pv. tomato strain DC3000 or expressing HopW1-1 (HopPmaA)). Necessary for the salicylic acid-(SA-) dependent systemic acquired resistance (SAR) response that involves expression of multiple defense responses, including synthesis of the phytoalexin camalexin and expression of pathogenesis-related genes (e.g. PR1, ALD1, BGL2 and PR5) in response to pathogens, triggering a signal amplification loop that increases SA levels via EDS5 and SID2, but, together with EDS1, seems to repress the ethylene/jasmonic acid (ET/JA) defense pathway. May also function in response to abiotic stresses such as UV-C light and LSD1-dependent acclimatization to light conditions that promote excess excitation energy (EEE), probably by transducing redox signals and modulating stomatal conductance. Regulates the formation of lysigenous aerenchyma in hypocotyls in response to hypoxia, maybe via hydrogen peroxide production. Modulates leaf senescence in insect-infested tissue and triggers a phloem-based defense mechanism including antibiosis (e.g. green peach aphid (GPA), M.persicae) to limit phloem sap uptake and insect growth, thus providing an EDS1-independent basal resistance to insects. Also involved in regulation of root meristematic zone-targeted growth arrest together with EDS1 and in a VICTR-dependent manner. In Arabidopsis thaliana (Mouse-ear cress), this protein is Lipase-like PAD4 (PAD4).